Consider the following 381-residue polypeptide: Layilin (381 aa).

The first 24 residues, 1-24 (MQPGAALQAMLLAVLLAKPRDSKG), serve as a signal peptide directing secretion. Over 25-235 (RLLSASDLDP…ERREAALNLA (211 aa)) the chain is Extracellular. The 141-residue stretch at 45 to 185 (TRRPCYKVIY…CNMKNNFICK (141 aa)) folds into the C-type lectin domain. Intrachain disulfides connect C71–C184 and C150–C176. Residue N117 is glycosylated (N-linked (GlcNAc...) asparagine). A helical transmembrane segment spans residues 236–256 (YILIPSIPLFLLLVVTSAVCW). The Cytoplasmic segment spans residues 257–381 (VWICRRKREQ…SGWVENEIYY (125 aa)). 2 positions are modified to phosphoserine: S286 and S299. Residues 330 to 374 (DYENIAVNPSESGFVTLASMESGFVTNDIYEFSPDRMGRSKESGW) form an interaction with NF2 region. The interval 337–381 (NPSESGFVTLASMESGFVTNDIYEFSPDRMGRSKESGWVENEIYY) is interaction with TLN1. Repeat copies occupy residues 340–344 (ESGFV), 350–354 (ESGFV), 356–359 (NDIY), 371–375 (ESGWV), and 377–380 (NEIY). Positions 340 to 375 (ESGFVTLASMESGFVTNDIYEFSPDRMGRSKESGWV) are 3 X 5 AA repeats of E-S-G-X-V. The 2 X 4 AA repeats of N-X-I-Y stretch occupies residues 356-380 (NDIYEFSPDRMGRSKESGWVENEIY).

In terms of assembly, interacts with TLN1. Interacts with NF2 and RDX.

It is found in the membrane. Functionally, receptor for hyaluronate. The protein is Layilin (Layn) of Mus musculus (Mouse).